The sequence spans 344 residues: Microcin C7 self-immunity protein MccF (344 aa).

It belongs to the peptidase S66 family.

Involved in specific self-immunity to microcin C7. In Escherichia coli, this protein is Microcin C7 self-immunity protein MccF (mccF).